The primary structure comprises 407 residues: 1-deoxy-D-xylulose 5-phosphate reductoisomerase (407 aa).

Thr-25, Gly-26, Ser-27, Ile-28, Asn-53, and Asn-136 together coordinate NADPH. Residue Lys-137 coordinates 1-deoxy-D-xylulose 5-phosphate. Glu-138 contacts NADPH. Asp-162 contacts Mn(2+). Ser-163, Glu-164, Ser-188, and His-211 together coordinate 1-deoxy-D-xylulose 5-phosphate. Glu-164 serves as a coordination point for Mn(2+). Gly-217 contributes to the NADPH binding site. Residues Ser-224, Asn-229, Lys-230, and Glu-233 each contribute to the 1-deoxy-D-xylulose 5-phosphate site. Glu-233 contacts Mn(2+).

It belongs to the DXR family. It depends on Mg(2+) as a cofactor. Mn(2+) serves as cofactor.

The enzyme catalyses 2-C-methyl-D-erythritol 4-phosphate + NADP(+) = 1-deoxy-D-xylulose 5-phosphate + NADPH + H(+). The protein operates within isoprenoid biosynthesis; isopentenyl diphosphate biosynthesis via DXP pathway; isopentenyl diphosphate from 1-deoxy-D-xylulose 5-phosphate: step 1/6. In terms of biological role, catalyzes the NADPH-dependent rearrangement and reduction of 1-deoxy-D-xylulose-5-phosphate (DXP) to 2-C-methyl-D-erythritol 4-phosphate (MEP). The sequence is that of 1-deoxy-D-xylulose 5-phosphate reductoisomerase from Bradyrhizobium sp. (strain BTAi1 / ATCC BAA-1182).